A 77-amino-acid chain; its full sequence is Putative defensin-like protein 30 (77 aa).

Residues 1–26 (MASSSKCAFLVFLCMIVLLAPSEVHA) form the signal peptide. Intrachain disulfides connect cysteine 43-cysteine 63, cysteine 49-cysteine 72, and cysteine 53-cysteine 74.

This sequence belongs to the DEFL family.

It is found in the secreted. The protein is Putative defensin-like protein 30 of Arabidopsis thaliana (Mouse-ear cress).